The sequence spans 317 residues: 2,3-dihydroxyphenylpropionate/2,3-dihydroxicinnamic acid 1,2-dioxygenase (317 aa).

Histidine 115 functions as the Proton donor in the catalytic mechanism. Histidine 179 (proton acceptor) is an active-site residue.

This sequence belongs to the LigB/MhpB extradiol dioxygenase family. As to quaternary structure, homotetramer. The cofactor is Fe(2+).

It catalyses the reaction 3-(2,3-dihydroxyphenyl)propanoate + O2 = (2Z,4E)-2-hydroxy-6-oxonona-2,4-dienedioate + H(+). The catalysed reaction is (2E)-3-(2,3-dihydroxyphenyl)prop-2-enoate + O2 = (2Z,4E,7E)-2-hydroxy-6-oxonona-2,4,7-trienedioate + H(+). Its pathway is aromatic compound metabolism; 3-phenylpropanoate degradation. In terms of biological role, catalyzes the non-heme iron(II)-dependent oxidative cleavage of 2,3-dihydroxyphenylpropionic acid and 2,3-dihydroxicinnamic acid into 2-hydroxy-6-ketononadienedioate and 2-hydroxy-6-ketononatrienedioate, respectively. The polypeptide is 2,3-dihydroxyphenylpropionate/2,3-dihydroxicinnamic acid 1,2-dioxygenase (Photorhabdus laumondii subsp. laumondii (strain DSM 15139 / CIP 105565 / TT01) (Photorhabdus luminescens subsp. laumondii)).